A 171-amino-acid polypeptide reads, in one-letter code: Peptide methionine sulfoxide reductase MsrA (171 aa).

The active site involves C13.

This sequence belongs to the MsrA Met sulfoxide reductase family.

The enzyme catalyses L-methionyl-[protein] + [thioredoxin]-disulfide + H2O = L-methionyl-(S)-S-oxide-[protein] + [thioredoxin]-dithiol. It carries out the reaction [thioredoxin]-disulfide + L-methionine + H2O = L-methionine (S)-S-oxide + [thioredoxin]-dithiol. Functionally, has an important function as a repair enzyme for proteins that have been inactivated by oxidation. Catalyzes the reversible oxidation-reduction of methionine sulfoxide in proteins to methionine. The polypeptide is Peptide methionine sulfoxide reductase MsrA (Mycobacterium sp. (strain MCS)).